The chain runs to 501 residues: Betaine aldehyde dehydrogenase, chloroplastic (501 aa).

The N-terminal 7 residues, 1 to 7, are a transit peptide targeting the chloroplast; sequence MAIRVPS. 238–243 contacts NAD(+); sequence GSTATG. The Proton acceptor role is filled by Glu-260. Residue Cys-294 is the Nucleophile of the active site.

This sequence belongs to the aldehyde dehydrogenase family. Homodimer.

Its subcellular location is the plastid. The protein resides in the chloroplast. It catalyses the reaction betaine aldehyde + NAD(+) + H2O = glycine betaine + NADH + 2 H(+). Its pathway is amine and polyamine biosynthesis; betaine biosynthesis via choline pathway; betaine from betaine aldehyde: step 1/1. The protein is Betaine aldehyde dehydrogenase, chloroplastic (BADH4) of Amaranthus hypochondriacus (Prince-of-Wales feather).